Reading from the N-terminus, the 434-residue chain is Protein HEAT INTOLERANT 4 (434 aa).

Residues 1–8 (MKKGAKRK) carry the Nuclear localization signal 1 motif. Positions 1 to 15 (MKKGAKRKGVSKAGR) are enriched in basic residues. The tract at residues 1–131 (MKKGAKRKGV…PVPKAKKPRA (131 aa)) is disordered. A compositionally biased stretch (basic and acidic residues) spans 30–53 (ETTKTTQEESQQHEEEVVDEVKEN). A compositionally biased stretch (acidic residues) spans 54 to 82 (GEEEEAKGDQEEEEDAKPDSLEEDEENQE). Positions 83-98 (DEVKAEEVKEEVEKKP) are enriched in basic and acidic residues. The short motif at 95 to 102 (EKKPVARR) is the Nuclear localization signal 2 element. Positions 99-110 (VARRGGKRKRAT) are enriched in basic residues. A compositionally biased stretch (basic and acidic residues) spans 111-122 (KKDTEIKDEKKP). Positions 363-394 (VKEQVRAAKKANREAKDARKKAIEEMSEDTKQ) form a coiled coil. The Nuclear localization signal 3 signature appears at 370–377 (AKKANREA).

It is found in the nucleus. The protein localises to the nucleolus. Functionally, essential protein required for basal thermotolerance, especially during heat-induced chromocentre decondensation, thus regulating transcriptional gene silencing (TGS). The protein is Protein HEAT INTOLERANT 4 of Arabidopsis thaliana (Mouse-ear cress).